A 301-amino-acid polypeptide reads, in one-letter code: Probable DNA-directed RNA polymerase III subunit rpc6 (301 aa).

It belongs to the eukaryotic RPC34/RPC39 RNA polymerase subunit family. In terms of assembly, component of the RNA polymerase III (Pol III) complex consisting of 17 subunits. Interacts with TFIIB.

The protein resides in the nucleus. DNA-dependent RNA polymerase catalyzes the transcription of DNA into RNA using the four ribonucleoside triphosphates as substrates. Specific peripheric component of RNA polymerase III which synthesizes small RNAs, such as 5S rRNA and tRNAs. The polypeptide is Probable DNA-directed RNA polymerase III subunit rpc6 (rpc6) (Schizosaccharomyces pombe (strain 972 / ATCC 24843) (Fission yeast)).